Reading from the N-terminus, the 403-residue chain is Phosphoglycerate kinase (403 aa).

Substrate-binding positions include 22–24 (DLN), R37, 60–63 (HLGN), R119, and R152. ATP is bound by residues K202, E325, and 355–358 (GGDT).

It belongs to the phosphoglycerate kinase family. In terms of assembly, monomer.

Its subcellular location is the cytoplasm. The catalysed reaction is (2R)-3-phosphoglycerate + ATP = (2R)-3-phospho-glyceroyl phosphate + ADP. It functions in the pathway carbohydrate degradation; glycolysis; pyruvate from D-glyceraldehyde 3-phosphate: step 2/5. This chain is Phosphoglycerate kinase, found in Orientia tsutsugamushi (strain Boryong) (Rickettsia tsutsugamushi).